The primary structure comprises 387 residues: Methylthioribose-1-phosphate isomerase (387 aa).

The active-site Proton donor is the D257.

It belongs to the eIF-2B alpha/beta/delta subunits family. MtnA subfamily.

The protein localises to the cytoplasm. It is found in the nucleus. It catalyses the reaction 5-(methylsulfanyl)-alpha-D-ribose 1-phosphate = 5-(methylsulfanyl)-D-ribulose 1-phosphate. The protein operates within amino-acid biosynthesis; L-methionine biosynthesis via salvage pathway; L-methionine from S-methyl-5-thio-alpha-D-ribose 1-phosphate: step 1/6. Its function is as follows. Catalyzes the interconversion of methylthioribose-1-phosphate (MTR-1-P) into methylthioribulose-1-phosphate (MTRu-1-P). This is Methylthioribose-1-phosphate isomerase (mri1) from Aspergillus fumigatus (strain CBS 144.89 / FGSC A1163 / CEA10) (Neosartorya fumigata).